The following is a 310-amino-acid chain: D-apiose import binding protein (310 aa).

The N-terminal stretch at 1 to 21 (MKLLKASLVALSLAASTFVYA) is a signal peptide. D-apiofuranose-binding positions include Asn-35, 111-112 (DR), 158-160 (DTN), Arg-164, Asn-214, Asp-239, and Gln-260.

It belongs to the bacterial solute-binding protein 2 family.

The protein resides in the periplasm. Part of an ABC transporter complex involved in D-apiose import. Binds D-apiose, D-ribose and D-ribulose. The sequence is that of D-apiose import binding protein from Actinobacillus succinogenes (strain ATCC 55618 / DSM 22257 / CCUG 43843 / 130Z).